Reading from the N-terminus, the 161-residue chain is Phosphopantetheine adenylyltransferase (161 aa).

Residue serine 10 coordinates substrate. ATP-binding positions include 10 to 11 and histidine 18; that span reads SF. Substrate contacts are provided by lysine 42, leucine 74, and arginine 88. Residues 88-89, glutamate 99, and 124-130 contribute to the ATP site; these read RG and YSFLSSS.

This sequence belongs to the bacterial CoaD family. As to quaternary structure, homohexamer. The cofactor is Mg(2+).

The protein localises to the cytoplasm. It catalyses the reaction (R)-4'-phosphopantetheine + ATP + H(+) = 3'-dephospho-CoA + diphosphate. Its pathway is cofactor biosynthesis; coenzyme A biosynthesis; CoA from (R)-pantothenate: step 4/5. Functionally, reversibly transfers an adenylyl group from ATP to 4'-phosphopantetheine, yielding dephospho-CoA (dPCoA) and pyrophosphate. The sequence is that of Phosphopantetheine adenylyltransferase from Bacillus subtilis (strain 168).